The sequence spans 115 residues: Immunoglobulin kappa chain variable 12-41 (115 aa).

The first 20 residues, 1 to 20 (MSVLTQVLALLLLWLTGARC), serve as a signal peptide directing secretion. The tract at residues 21–43 (DIQMTQSPASLSASVGETVTITC) is framework-1. Cysteine 43 and cysteine 108 are oxidised to a cystine. The complementarity-determining-1 stretch occupies residues 44–54 (RASGNIHNYLA). The segment at 55-69 (WYQQKQGKSPQLLVY) is framework-2. The interval 70–76 (NAKTLAD) is complementarity-determining-2. A framework-3 region spans residues 77–108 (GVPSRFSGSGSGTQYSLKINSLQPEDFGSYYC). The complementarity-determining-3 stretch occupies residues 109–115 (QHFWSTP).

This chain is Immunoglobulin kappa chain variable 12-41, found in Mus musculus (Mouse).